The chain runs to 164 residues: Phosphopantetheine adenylyltransferase (164 aa).

Position 10 (Thr10) interacts with substrate. Residues 10-11 (TF) and His18 contribute to the ATP site. The substrate site is built by Lys42, Leu74, and Arg88. ATP contacts are provided by residues 89-91 (GIR), Glu99, and 124-130 (YAFVSST).

It belongs to the bacterial CoaD family. In terms of assembly, homohexamer. It depends on Mg(2+) as a cofactor.

The protein resides in the cytoplasm. The enzyme catalyses (R)-4'-phosphopantetheine + ATP + H(+) = 3'-dephospho-CoA + diphosphate. The protein operates within cofactor biosynthesis; coenzyme A biosynthesis; CoA from (R)-pantothenate: step 4/5. Reversibly transfers an adenylyl group from ATP to 4'-phosphopantetheine, yielding dephospho-CoA (dPCoA) and pyrophosphate. This Tolumonas auensis (strain DSM 9187 / NBRC 110442 / TA 4) protein is Phosphopantetheine adenylyltransferase.